We begin with the raw amino-acid sequence, 462 residues long: Trigger factor (462 aa).

The PPIase FKBP-type domain occupies 161-246 (GDVVVIDFVG…VKEVRAPKAA (86 aa)). Positions 428 to 437 (SVEDLRKDPD) are enriched in basic and acidic residues. The segment at 428–462 (SVEDLRKDPDEASADGEAAPAKPKKKAAAKKKAAE) is disordered. Residues 449-462 (KPKKKAAAKKKAAE) show a composition bias toward basic residues.

This sequence belongs to the FKBP-type PPIase family. Tig subfamily.

The protein resides in the cytoplasm. The catalysed reaction is [protein]-peptidylproline (omega=180) = [protein]-peptidylproline (omega=0). Functionally, involved in protein export. Acts as a chaperone by maintaining the newly synthesized protein in an open conformation. Functions as a peptidyl-prolyl cis-trans isomerase. This is Trigger factor from Paramagnetospirillum magneticum (strain ATCC 700264 / AMB-1) (Magnetospirillum magneticum).